The sequence spans 106 residues: Small ribosomal subunit protein uS10 (106 aa).

Belongs to the universal ribosomal protein uS10 family. In terms of assembly, part of the 30S ribosomal subunit.

Functionally, involved in the binding of tRNA to the ribosomes. This Synechococcus sp. (strain CC9605) protein is Small ribosomal subunit protein uS10.